Consider the following 1014-residue polypeptide: Probable transport protein MmpL11 (1014 aa).

A run of 12 helical transmembrane segments spans residues 13–33 (WLVF…AMTQ), 156–173 (VRLY…VAAN), 188–208 (IILI…VPLA), 235–255 (TSTV…FILM), 279–299 (GLAV…IYLI), 311–331 (AILA…AALA), 373–393 (ASAA…MMLG), 530–550 (TEPL…LISI), 560–580 (VLMT…VFQW), 598–618 (VPPL…IFLL), 649–669 (AALI…PLVA), and 671–691 (IGVA…LVLV). Positions 783–802 (SDRVLPGAATQESEEDPAMG) are disordered.

This sequence belongs to the resistance-nodulation-cell division (RND) (TC 2.A.6) family. MmpL subfamily.

It localises to the cell membrane. In Mycobacterium leprae (strain TN), this protein is Probable transport protein MmpL11 (mmpL11).